We begin with the raw amino-acid sequence, 463 residues long: Chromosomal replication initiator protein DnaA (463 aa).

The tract at residues Met-1–Thr-83 is domain I, interacts with DnaA modulators. Positions Thr-83–Ser-124 are domain II. A domain III, AAA+ region region spans residues Thr-125 to Ser-343. 4 residues coordinate ATP: Gly-171, Gly-173, Lys-174, and Thr-175. The domain IV, binds dsDNA stretch occupies residues Asn-344–Asn-463.

This sequence belongs to the DnaA family. Oligomerizes as a right-handed, spiral filament on DNA at oriC.

Its subcellular location is the cytoplasm. Functionally, plays an essential role in the initiation and regulation of chromosomal replication. ATP-DnaA binds to the origin of replication (oriC) to initiate formation of the DNA replication initiation complex once per cell cycle. Binds the DnaA box (a 9 base pair repeat at the origin) and separates the double-stranded (ds)DNA. Forms a right-handed helical filament on oriC DNA; dsDNA binds to the exterior of the filament while single-stranded (ss)DNA is stabiized in the filament's interior. The ATP-DnaA-oriC complex binds and stabilizes one strand of the AT-rich DNA unwinding element (DUE), permitting loading of DNA polymerase. After initiation quickly degrades to an ADP-DnaA complex that is not apt for DNA replication. Binds acidic phospholipids. The polypeptide is Chromosomal replication initiator protein DnaA (Rickettsia conorii (strain ATCC VR-613 / Malish 7)).